The following is a 130-amino-acid chain: Small ribosomal subunit protein uS11 (130 aa).

Belongs to the universal ribosomal protein uS11 family. As to quaternary structure, part of the 30S ribosomal subunit. Interacts with proteins S7 and S18. Binds to IF-3.

Its function is as follows. Located on the platform of the 30S subunit, it bridges several disparate RNA helices of the 16S rRNA. Forms part of the Shine-Dalgarno cleft in the 70S ribosome. In Acidiphilium cryptum (strain JF-5), this protein is Small ribosomal subunit protein uS11.